Here is a 524-residue protein sequence, read N- to C-terminus: Solute carrier family 40 member 1 (524 aa).

A compositionally biased stretch (basic and acidic residues) spans 1 to 18 (MENETELRVVHQEEQQRE). A disordered region spans residues 1–30 (MENETELRVVHQEEQQREEGEDESQPQNPP). A run of 11 helical transmembrane segments spans residues 70-92 (SLLL…GPIV), 109-129 (LLFQ…LLLV), 137-157 (LPVF…GVLS), 191-211 (GIDL…ISFV), 218-238 (ITFA…FISV), 314-334 (VVLP…FGTL), 347-367 (YIIG…TLVY), 380-400 (GLWS…SIWV), 409-429 (MLMA…LAVI), 446-466 (GVQN…GIIV), and 472-492 (FWIL…LYTI).

It belongs to the ferroportin (FP) (TC 2.A.100) family. SLC40A subfamily.

Its subcellular location is the membrane. In terms of biological role, may be involved in iron transport and iron homeostasis. The chain is Solute carrier family 40 member 1 (IREG1) from Arabidopsis thaliana (Mouse-ear cress).